The following is an 863-amino-acid chain: DNA mismatch repair protein MutS (863 aa).

Residue 607 to 614 (GPNMAGKS) participates in ATP binding.

This sequence belongs to the DNA mismatch repair MutS family.

Its function is as follows. This protein is involved in the repair of mismatches in DNA. It is possible that it carries out the mismatch recognition step. This protein has a weak ATPase activity. This chain is DNA mismatch repair protein MutS, found in Caldicellulosiruptor bescii (strain ATCC BAA-1888 / DSM 6725 / KCTC 15123 / Z-1320) (Anaerocellum thermophilum).